The sequence spans 751 residues: Transposable element P transposase (751 aa).

The THAP-type zinc finger occupies 1 to 77; sequence MKYCKFCCKA…LNADAVPSKV (77 aa).

Functionally, P-element transposase that specifically mediates transposition of P-elements. Mediates both; precise and imprecise excision. In Drosophila melanogaster (Fruit fly), this protein is Transposable element P transposase.